The sequence spans 194 residues: Cytochrome c biogenesis ATP-binding export protein CcmA (194 aa).

The 190-residue stretch at 5–194 folds into the ABC transporter domain; the sequence is LALDGVACIR…LDELVMGVLA (190 aa). An ATP-binding site is contributed by 37-44; sequence GPNGAGKS.

This sequence belongs to the ABC transporter superfamily. CcmA exporter (TC 3.A.1.107) family. In terms of assembly, the complex is composed of two ATP-binding proteins (CcmA) and two transmembrane proteins (CcmB).

It localises to the cell inner membrane. The enzyme catalyses heme b(in) + ATP + H2O = heme b(out) + ADP + phosphate + H(+). Functionally, part of the ABC transporter complex CcmAB involved in the biogenesis of c-type cytochromes; once thought to export heme, this seems not to be the case, but its exact role is uncertain. Responsible for energy coupling to the transport system. In Sphingopyxis alaskensis (strain DSM 13593 / LMG 18877 / RB2256) (Sphingomonas alaskensis), this protein is Cytochrome c biogenesis ATP-binding export protein CcmA.